Here is a 117-residue protein sequence, read N- to C-terminus: Large ribosomal subunit protein uL18 (117 aa).

It belongs to the universal ribosomal protein uL18 family. In terms of assembly, part of the 50S ribosomal subunit; part of the 5S rRNA/L5/L18/L25 subcomplex. Contacts the 5S and 23S rRNAs.

Its function is as follows. This is one of the proteins that bind and probably mediate the attachment of the 5S RNA into the large ribosomal subunit, where it forms part of the central protuberance. This chain is Large ribosomal subunit protein uL18, found in Pasteurella multocida (strain Pm70).